Reading from the N-terminus, the 161-residue chain is ATP synthase subunit b 1 (161 aa).

A helical membrane pass occupies residues 3–23 (LDATFYALVGLILFFVLIAYL).

The protein belongs to the ATPase B chain family. In terms of assembly, F-type ATPases have 2 components, F(1) - the catalytic core - and F(0) - the membrane proton channel. F(1) has five subunits: alpha(3), beta(3), gamma(1), delta(1), epsilon(1). F(0) has three main subunits: a(1), b(2) and c(10-14). The alpha and beta chains form an alternating ring which encloses part of the gamma chain. F(1) is attached to F(0) by a central stalk formed by the gamma and epsilon chains, while a peripheral stalk is formed by the delta and b chains.

The protein localises to the cell inner membrane. Functionally, f(1)F(0) ATP synthase produces ATP from ADP in the presence of a proton or sodium gradient. F-type ATPases consist of two structural domains, F(1) containing the extramembraneous catalytic core and F(0) containing the membrane proton channel, linked together by a central stalk and a peripheral stalk. During catalysis, ATP synthesis in the catalytic domain of F(1) is coupled via a rotary mechanism of the central stalk subunits to proton translocation. Its function is as follows. Component of the F(0) channel, it forms part of the peripheral stalk, linking F(1) to F(0). The chain is ATP synthase subunit b 1 from Sinorhizobium medicae (strain WSM419) (Ensifer medicae).